Reading from the N-terminus, the 78-residue chain is uncharacterized protein (78 aa).

The interval 20 to 78 (LQDLFPPHFGNEEADEDDEDGDKYGDDDGEFYGDNDGDNDGDNDGVNDGVGDGPPSTLL) is disordered. The span at 31 to 64 (EEADEDDEDGDKYGDDDGEFYGDNDGDNDGDNDG) shows a compositional bias: acidic residues.

This is an uncharacterized protein from Dictyostelium discoideum (Social amoeba).